Reading from the N-terminus, the 277-residue chain is Kallikrein-13 (277 aa).

The first 16 residues, 1–16 (MWPLALVIASLTLALS), serve as a signal peptide directing secretion. Asn30 carries an N-linked (GlcNAc...) asparagine glycan. A Peptidase S1 domain is found at 36-263 (LPGGYTCFPH…YVLWIRETIR (228 aa)). Intrachain disulfides connect Cys42–Cys178, Cys61–Cys77, Cys157–Cys224, Cys189–Cys203, and Cys214–Cys239. Residues His76 and Asp124 each act as charge relay system in the active site. Catalysis depends on Ser218, which acts as the Charge relay system. The N-linked (GlcNAc...) asparagine glycan is linked to Asn225.

This sequence belongs to the peptidase S1 family. Kallikrein subfamily. As to expression, expressed in prostate, breast, testis and salivary gland.

It localises to the secreted. The polypeptide is Kallikrein-13 (KLK13) (Homo sapiens (Human)).